The sequence spans 227 residues: CDP-diacylglycerol--glycerol-3-phosphate 3-phosphatidyltransferase (227 aa).

The next 5 membrane-spanning stretches (helical) occupy residues 30–50 (IFIA…GSVA), 58–78 (VTIH…TAVI), 112–132 (VLIA…VIVL), 159–179 (WKTT…SFSL), and 192–212 (WAIV…SFGI).

This sequence belongs to the CDP-alcohol phosphatidyltransferase class-I family.

The protein resides in the cell membrane. It carries out the reaction a CDP-1,2-diacyl-sn-glycerol + sn-glycerol 3-phosphate = a 1,2-diacyl-sn-glycero-3-phospho-(1'-sn-glycero-3'-phosphate) + CMP + H(+). The protein operates within phospholipid metabolism; phosphatidylglycerol biosynthesis; phosphatidylglycerol from CDP-diacylglycerol: step 1/2. This protein catalyzes the committed step to the synthesis of the acidic phospholipids. The polypeptide is CDP-diacylglycerol--glycerol-3-phosphate 3-phosphatidyltransferase (pgsA) (Mycoplasma pneumoniae (strain ATCC 29342 / M129 / Subtype 1) (Mycoplasmoides pneumoniae)).